Consider the following 157-residue polypeptide: 2-C-methyl-D-erythritol 2,4-cyclodiphosphate synthase (157 aa).

A divalent metal cation contacts are provided by aspartate 8 and histidine 10. 4-CDP-2-C-methyl-D-erythritol 2-phosphate-binding positions include 8–10 and 34–35; these read DVH and HS. Histidine 42 lines the a divalent metal cation pocket. Residues 56–58, 61–65, 132–135, phenylalanine 139, and arginine 142 each bind 4-CDP-2-C-methyl-D-erythritol 2-phosphate; these read DIG, FPDNE, and TTTE.

It belongs to the IspF family. In terms of assembly, homotrimer. A divalent metal cation is required as a cofactor.

It carries out the reaction 4-CDP-2-C-methyl-D-erythritol 2-phosphate = 2-C-methyl-D-erythritol 2,4-cyclic diphosphate + CMP. Its pathway is isoprenoid biosynthesis; isopentenyl diphosphate biosynthesis via DXP pathway; isopentenyl diphosphate from 1-deoxy-D-xylulose 5-phosphate: step 4/6. Its function is as follows. Involved in the biosynthesis of isopentenyl diphosphate (IPP) and dimethylallyl diphosphate (DMAPP), two major building blocks of isoprenoid compounds. Catalyzes the conversion of 4-diphosphocytidyl-2-C-methyl-D-erythritol 2-phosphate (CDP-ME2P) to 2-C-methyl-D-erythritol 2,4-cyclodiphosphate (ME-CPP) with a corresponding release of cytidine 5-monophosphate (CMP). This chain is 2-C-methyl-D-erythritol 2,4-cyclodiphosphate synthase, found in Desulforamulus reducens (strain ATCC BAA-1160 / DSM 100696 / MI-1) (Desulfotomaculum reducens).